Here is an 89-residue protein sequence, read N- to C-terminus: Small ribosomal subunit protein uS14A (89 aa).

The protein belongs to the universal ribosomal protein uS14 family. Part of the 30S ribosomal subunit. Contacts proteins S3 and S10.

In terms of biological role, binds 16S rRNA, required for the assembly of 30S particles and may also be responsible for determining the conformation of the 16S rRNA at the A site. The chain is Small ribosomal subunit protein uS14A from Oceanobacillus iheyensis (strain DSM 14371 / CIP 107618 / JCM 11309 / KCTC 3954 / HTE831).